Reading from the N-terminus, the 360-residue chain is MKFIIKTQKGFENIVVNNLKEIVDDFNYIVSPDGYQGIVIVESDEDIEDKILQIPEVERVLKVYFETETDFDKIVNLAEKIKDYIKEDETFAVETKKRGKHDFSSTDINIVLGAKIKDLTNASVDLNNPDKVVHVEVFKNKTYVSITPGEKFKKYTKEKRNARELFKKVVIVQMPYLGEKIVCKRFGEAIGRAAQGFEVKELIIAPKEKVDAYELMEFIKGVKIGQHSRYEIQKRAYPFEIKLVPVTVQDLYQVVRDKRRDNRLLIITDPKGDELSKIKDKLAYDLRKKREIIVFCGSREGIPRGLFRFADYIVDLAPHMTFATEHAIPAALIALWGVYSGEDLENSSKEEKTESNSNGE.

The THUMP domain maps to 45–148 (EDIEDKILQI…KNKTYVSITP (104 aa)).

This is an uncharacterized protein from Methanocaldococcus jannaschii (strain ATCC 43067 / DSM 2661 / JAL-1 / JCM 10045 / NBRC 100440) (Methanococcus jannaschii).